Reading from the N-terminus, the 390-residue chain is Methionyl-tRNA formyltransferase, mitochondrial (390 aa).

A mitochondrion-targeting transit peptide spans 1–33 (MRVLLRCCCGHLPVGGGAGRRSNPRWRALARLS).

It belongs to the Fmt family.

It localises to the mitochondrion. It carries out the reaction L-methionyl-tRNA(fMet) + (6R)-10-formyltetrahydrofolate = N-formyl-L-methionyl-tRNA(fMet) + (6S)-5,6,7,8-tetrahydrofolate + H(+). Functionally, methionyl-tRNA formyltransferase that formylates methionyl-tRNA in mitochondria and is crucial for translation initiation. The protein is Methionyl-tRNA formyltransferase, mitochondrial (MTFMT) of Bos taurus (Bovine).